The chain runs to 101 residues: Urease subunit beta (101 aa).

Belongs to the urease beta subunit family. Heterotrimer of UreA (gamma), UreB (beta) and UreC (alpha) subunits. Three heterotrimers associate to form the active enzyme.

The protein resides in the cytoplasm. It catalyses the reaction urea + 2 H2O + H(+) = hydrogencarbonate + 2 NH4(+). It participates in nitrogen metabolism; urea degradation; CO(2) and NH(3) from urea (urease route): step 1/1. The sequence is that of Urease subunit beta from Cupriavidus pinatubonensis (strain JMP 134 / LMG 1197) (Cupriavidus necator (strain JMP 134)).